The sequence spans 352 residues: Anthranilate phosphoribosyltransferase (352 aa).

5-phospho-alpha-D-ribose 1-diphosphate-binding positions include Gly-82, 85-86, Ser-90, 92-95, 110-118, and Gly-122; these read GD, NIST, and KHGNRAVTG. Residue Gly-82 participates in anthranilate binding. A Mg(2+)-binding site is contributed by Ser-94. Asn-113 contacts anthranilate. Arg-168 is a binding site for anthranilate. Asp-232 and Glu-233 together coordinate Mg(2+).

It belongs to the anthranilate phosphoribosyltransferase family. As to quaternary structure, homodimer. It depends on Mg(2+) as a cofactor.

The catalysed reaction is N-(5-phospho-beta-D-ribosyl)anthranilate + diphosphate = 5-phospho-alpha-D-ribose 1-diphosphate + anthranilate. It functions in the pathway amino-acid biosynthesis; L-tryptophan biosynthesis; L-tryptophan from chorismate: step 2/5. Functionally, catalyzes the transfer of the phosphoribosyl group of 5-phosphorylribose-1-pyrophosphate (PRPP) to anthranilate to yield N-(5'-phosphoribosyl)-anthranilate (PRA). In Methanothermobacter thermautotrophicus (strain ATCC 29096 / DSM 1053 / JCM 10044 / NBRC 100330 / Delta H) (Methanobacterium thermoautotrophicum), this protein is Anthranilate phosphoribosyltransferase.